The sequence spans 616 residues: Glutamine--fructose-6-phosphate aminotransferase [isomerizing] (616 aa).

Cysteine 2 (nucleophile; for GATase activity) is an active-site residue. The Glutamine amidotransferase type-2 domain maps to 2–222 (CGIIGYSGPR…QERIVALSGD (221 aa)). The disordered stretch occupies residues 70–89 (TGIGHTRWATHGEPSDRNAH). SIS domains lie at 289–428 (IRDD…LRGF) and 461–606 (LAHW…VDRP). Lysine 611 serves as the catalytic For Fru-6P isomerization activity.

As to quaternary structure, homodimer.

The protein resides in the cytoplasm. It carries out the reaction D-fructose 6-phosphate + L-glutamine = D-glucosamine 6-phosphate + L-glutamate. In terms of biological role, catalyzes the first step in hexosamine metabolism, converting fructose-6P into glucosamine-6P using glutamine as a nitrogen source. The sequence is that of Glutamine--fructose-6-phosphate aminotransferase [isomerizing] from Tropheryma whipplei (strain Twist) (Whipple's bacillus).